A 458-amino-acid chain; its full sequence is MPN domain-containing protein (458 aa).

The segment at Met1–Arg37 is disordered. The segment covering Glu14–Asp28 has biased composition (acidic residues). Positions Thr42–Tyr137 constitute an RAMA domain. Ser94, Ser96, and Trp116 together coordinate DNA. The interval Ser147 to Ser175 is disordered. Positions Glu148–Glu161 are enriched in acidic residues. Residues Val229 to Val364 enclose the MPN domain. 3 residues coordinate Zn(2+): His306, His308, and Asp319. The short motif at His306–Asp319 is the JAMM motif element.

This sequence belongs to the peptidase M67 family. Post-translationally, degraded following binding to N(6)-methyladenosine methylated DNA (m6A).

Functionally, probable protease. Acts as a sensor of N(6)-methyladenosine methylation on DNA (m6A): recognizes and binds m6A DNA, leading to its degradation. Binds only double strand DNA (dsDNA) in a sequence-independent manner. The sequence is that of MPN domain-containing protein from Danio rerio (Zebrafish).